Consider the following 86-residue polypeptide: Small ribosomal subunit protein uS17 (86 aa).

This sequence belongs to the universal ribosomal protein uS17 family. As to quaternary structure, part of the 30S ribosomal subunit.

Functionally, one of the primary rRNA binding proteins, it binds specifically to the 5'-end of 16S ribosomal RNA. The protein is Small ribosomal subunit protein uS17 of Nitrosococcus oceani (strain ATCC 19707 / BCRC 17464 / JCM 30415 / NCIMB 11848 / C-107).